The chain runs to 462 residues: L-seryl-tRNA(Sec) selenium transferase (462 aa).

Lys295 carries the post-translational modification N6-(pyridoxal phosphate)lysine.

Belongs to the SelA family. In terms of assembly, homodecamer; pentamer of dimers. Binds only one seryl-tRNA(Sec) per dimer. Pyridoxal 5'-phosphate serves as cofactor.

It is found in the cytoplasm. The catalysed reaction is L-seryl-tRNA(Sec) + selenophosphate + H(+) = L-selenocysteinyl-tRNA(Sec) + phosphate. Its pathway is aminoacyl-tRNA biosynthesis; selenocysteinyl-tRNA(Sec) biosynthesis; selenocysteinyl-tRNA(Sec) from L-seryl-tRNA(Sec) (bacterial route): step 1/1. In terms of biological role, converts seryl-tRNA(Sec) to selenocysteinyl-tRNA(Sec) required for selenoprotein biosynthesis. In Klebsiella pneumoniae subsp. pneumoniae (strain ATCC 700721 / MGH 78578), this protein is L-seryl-tRNA(Sec) selenium transferase.